The primary structure comprises 48 residues: Large ribosomal subunit protein bL34c (48 aa).

It belongs to the bacterial ribosomal protein bL34 family.

The protein localises to the plastid. The protein resides in the chloroplast. This Thalassiosira pseudonana (Marine diatom) protein is Large ribosomal subunit protein bL34c.